The chain runs to 303 residues: Centromere protein O (303 aa).

Residues 38-77 (AALRKNQELVLELRKKRDELKAKIERHKAEIQAFRGREEA) adopt a coiled-coil conformation.

The protein belongs to the CENP-O/MCM21 family.

Its subcellular location is the nucleus. The protein localises to the chromosome. It is found in the centromere. In terms of biological role, probable component of a centromeric complex involved in assembly of kinetochore proteins, mitotic progression and chromosome segregation. The chain is Centromere protein O (cenpo) from Xenopus tropicalis (Western clawed frog).